The following is a 626-amino-acid chain: Colicin-Ib (626 aa).

The span at 276–286 (QQLTQQKNTPD) shows a compositional bias: polar residues. Positions 276 to 308 (QQLTQQKNTPDGKTIVSPEKFPGRSSTNHSIVV) are disordered. A helical membrane pass occupies residues 588–612 (FSVMLGTPVGILGFAIIMAAVSALV).

It belongs to the channel forming colicin family.

Its subcellular location is the host membrane. This colicin is a channel-forming colicin. This class of transmembrane toxins depolarize the cytoplasmic membrane, leading to dissipation of cellular energy. Functionally, colicins are polypeptide toxins produced by and active against E.coli and closely related bacteria. The chain is Colicin-Ib (cib) from Escherichia coli.